We begin with the raw amino-acid sequence, 605 residues long: Ubiquitin carboxyl-terminal hydrolase 2 (605 aa).

The necessary for interaction with MDM4 stretch occupies residues 1–200; it reads MSQLSSTLKR…CPEYLVDYLE (200 aa). Disordered stretches follow at residues 71–107 and 237–264; these read LLDY…GSGL and WETG…KSAQ. Residues 90–100 show a composition bias toward basic and acidic residues; it reads KRAESQTRGTE. Low complexity predominate over residues 245-255; sequence PGPSRSSSPGR. One can recognise a USP domain in the interval 267-599; sequence AGLRNLGNTC…DAYLLFYELA (333 aa). Cysteine 276 acts as the Nucleophile in catalysis. Residues 403–503 are necessary for interaction with MDM4; sequence YLEREDSRIG…FPKILVLHLK (101 aa). Residues cysteine 425, cysteine 428, cysteine 476, and cysteine 479 each coordinate Zn(2+). Histidine 557 acts as the Proton acceptor in catalysis.

The protein belongs to the peptidase C19 family. USP2 subfamily. As to quaternary structure, homooligomer. Found in trimeric complex with MDM2 and MDM4 and USP2. Interacts with CCND1; the interaction is direct and promotes its stabilization by antagonizing ubiquitin-dependent degradation. Interacts (via N-terminus and C-terminus) with MDM2. Interacts with MDM4. Interacts with PER1. Interacts with KCNQ1; counteracts the NEDD4L-specific down-regulation of I(Ks) and restore plasma membrane localization of KCNQ1. Isoform 4: Interacts with NHERF4 and CLTC. In terms of tissue distribution, expressed in mesangial cells of the kidney and in different types of glomerulonephritides (at protein level).

The protein localises to the cytoplasm. It localises to the perinuclear region. Its subcellular location is the nucleus. It is found in the membrane. The catalysed reaction is Thiol-dependent hydrolysis of ester, thioester, amide, peptide and isopeptide bonds formed by the C-terminal Gly of ubiquitin (a 76-residue protein attached to proteins as an intracellular targeting signal).. Its activity is regulated as follows. Cleavage is inhibited by ubiquitin in a dosage-dependent manner. Cleavage is blocked by ubiquitin aldehyde. Functionally, hydrolase that deubiquitinates polyubiquitinated target proteins such as MDM2, MDM4 and CCND1. Isoform 1 and isoform 4 possess both ubiquitin-specific peptidase and isopeptidase activities. Deubiquitinates MDM2 without reversing MDM2-mediated p53/TP53 ubiquitination and thus indirectly promotes p53/TP53 degradation and limits p53 activity. Has no deubiquitinase activity against p53/TP53. Prevents MDM2-mediated degradation of MDM4. Plays a role in the G1/S cell-cycle progression in normal and cancer cells. Regulates the circadian clock by modulating its intrinsic circadian rhythm and its capacity to respond to external cues. Associates with clock proteins and deubiquitinates core clock component PER1 but does not affect its overall stability. Regulates the nucleocytoplasmic shuttling and nuclear retention of PER1 and its repressive role on the clock transcription factors CLOCK and BMAL1. Plays a role in the regulation of myogenic differentiation of embryonic muscle cells. Its function is as follows. Circadian clock output effector that regulates Ca(2+) absorption in the small intestine. Probably functions by regulating protein levels of the membrane scaffold protein NHERF4 in a rhythmic manner, and is therefore likely to control Ca(2+) membrane permeability mediated by the Ca(2+) channel TRPV6 in the intestine. The sequence is that of Ubiquitin carboxyl-terminal hydrolase 2 (USP2) from Homo sapiens (Human).